Reading from the N-terminus, the 332-residue chain is MRKITVFGMGSFGTALANVLAQNGHDVLMWGKNVENVDELNTHHMNKNYLKDAKLDSSIKATVDLNKAVQFSDIYLMALPTKAIREVSKDIDQLLTSKKTFIHVAKGIENDTFKRVSEMIEDSISSEHNGGIGVLSGPSHAEEVVIKQPTTVAASSKDNNVSKLIQDLFMNDYLRVYTNNDLVGVELGGALKNIIAIASGIVAGMGWGDNAKAALMTRGLAEISRLGEKLGADPMTFLGLGGIGDLIVTCTSTHSRNYTLGFKLGQGKTAEEALKEMKMVVEGIYTTKSVYHLAQQEGVEMPITNALYEVLFEDVPVSKSVRTLMERDKKAE.

Residues Ser11, Phe12, Lys32, and Lys106 each contribute to the NADPH site. Lys106, Gly137, and Ser139 together coordinate sn-glycerol 3-phosphate. An NADPH-binding site is contributed by Ala141. Positions 192, 245, 255, 256, and 257 each coordinate sn-glycerol 3-phosphate. Lys192 (proton acceptor) is an active-site residue. Arg256 serves as a coordination point for NADPH. Residues Val280 and Glu282 each contribute to the NADPH site.

It belongs to the NAD-dependent glycerol-3-phosphate dehydrogenase family.

It localises to the cytoplasm. The catalysed reaction is sn-glycerol 3-phosphate + NAD(+) = dihydroxyacetone phosphate + NADH + H(+). It carries out the reaction sn-glycerol 3-phosphate + NADP(+) = dihydroxyacetone phosphate + NADPH + H(+). The protein operates within membrane lipid metabolism; glycerophospholipid metabolism. Functionally, catalyzes the reduction of the glycolytic intermediate dihydroxyacetone phosphate (DHAP) to sn-glycerol 3-phosphate (G3P), the key precursor for phospholipid synthesis. This Staphylococcus epidermidis (strain ATCC 12228 / FDA PCI 1200) protein is Glycerol-3-phosphate dehydrogenase [NAD(P)+].